A 666-amino-acid polypeptide reads, in one-letter code: Hybrid PKS-NRPS synthetase pytA (666 aa).

Residues 1–340 (MDPQQRLLLE…GTNAHAILEE (340 aa)) enclose the Ketosynthase family 3 (KS3) domain. Residues Cys-87, His-222, and His-260 each act as for beta-ketoacyl synthase activity in the active site. The tract at residues 455-665 (VFTGQGAQWF…VFVHSLVIKR (211 aa)) is malonyl-CoA:ACP transacylase (MAT) domain. Ser-548 (for malonyltransferase activity) is an active-site residue.

In the C-terminal section; belongs to the NRP synthetase family.

It functions in the pathway secondary metabolite biosynthesis. In terms of biological role, hybrid PKS-NRPS synthetase; part of the gene cluster that mediates the biosynthesis of pyranterreones, a family of antioxidative compounds. The first step of pyranonigrins biosynthesis is performed by the hybrid PKS-NRPS synthetase pytA that condenses 4 malonyl-CoA units ato the acetyl starter unit by the modular PKS of pytA. The acyl chain is then connected to an L-serine through the amide bond by the modular NRPS of pytA. A tetramic acid is formed and released from the PKS-NRPS pytA to give pyranterreone 5 with the help of the thioesterase pytI. Pyranterreone 5 could be methylated by pytC to afford pyranterreone 6. Both pyranterreones 5 and 6 are subsequently oxidized by the FAD-linked oxidoreductase pytB and the cytochrome P450 monooxygenase pytD to form the fused gamma-pyrone core, resulting in pyranterreones 7 and 11, respectively. The hydroxy group at C-8 of pyranterreones 7 and 11 are dehydrated by the aspartyl protease pytH to form a delta-7 double bond to give pyranterreones 3 and 1, 2 accordingly. The exo-methylene of pyranterreone 3 could be reduced into a pendant methyl by reductase pytE to provide pyranterreone 4, also known as cordylactam. Pyranterreone 4 can be reconverted to pyranterreone 3 through pytB-catalyzed dehydrogenation or further oxidized to pyranterreones 9 and 10. This Aspergillus terreus (strain NIH 2624 / FGSC A1156) protein is Hybrid PKS-NRPS synthetase pytA.